We begin with the raw amino-acid sequence, 348 residues long: Propane 2-monooxygenase, reductase component (348 aa).

The 2Fe-2S ferredoxin-type domain maps to 5–95 (HKINFDPVDI…DCTIELLNFD (91 aa)). [2Fe-2S] cluster contacts are provided by Cys-39, Cys-44, Cys-47, and Cys-79. Residues 105–206 (IQDVRTQVQA…TGPYGSFTLK (102 aa)) enclose the FAD-binding FR-type domain.

It belongs to the bacterial ring-hydroxylating dioxygenase ferredoxin reductase family. In terms of assembly, the propane 2-monooxygenase multicomponent enzyme system is composed of an electron transfer component and a monooxygenase component interacting with the effector protein MimD. The electron transfer component is composed of a reductase (MimB), and the monooxygenase component is formed by a large subunit (MimA) and a small subunit (MimC). It depends on FAD as a cofactor. The cofactor is [2Fe-2S] cluster.

In terms of biological role, reductase component of the propane 2-monooxygenase multicomponent enzyme system which is involved in the degradation of propane via the O2-dependent hydroxylation of propane. Reductase catalyzes the transfer of electrons from NADH or NADPH to monooxygenase. The protein is Propane 2-monooxygenase, reductase component of Mycolicibacterium smegmatis (strain ATCC 700084 / mc(2)155) (Mycobacterium smegmatis).